Reading from the N-terminus, the 281-residue chain is sn-glycerol-3-phosphate transport system permease protein UgpE (281 aa).

6 helical membrane passes run 16 to 36, 85 to 105, 113 to 133, 142 to 162, 202 to 222, and 247 to 267; these read LILGIAVILFPLYVAFVAATL, FSITLGKITVSMLSAFAIVWF, FFWMIFITLMLPVEVRIFPTV, LDSYAGLTLPLMASAIATFLF, ALFVITFIYGWNQYLWPLLII, and WNSVMAAMLLTLIPPVVIVLV. One can recognise an ABC transmembrane type-1 domain in the interval 77-268; it reads LLNSFVMAFS…IPPVVIVLVM (192 aa).

The protein belongs to the binding-protein-dependent transport system permease family. UgpAE subfamily. In terms of assembly, the complex is composed of two ATP-binding proteins (UgpC), two transmembrane proteins (UgpA and UgpE) and a solute-binding protein (UgpB).

It localises to the cell inner membrane. Part of the ABC transporter complex UgpBAEC involved in sn-glycerol-3-phosphate (G3P) import. Probably responsible for the translocation of the substrate across the membrane. In Shigella flexneri serotype 5b (strain 8401), this protein is sn-glycerol-3-phosphate transport system permease protein UgpE (ugpE).